A 164-amino-acid polypeptide reads, in one-letter code: Thiol peroxidase (164 aa).

The Thioredoxin domain occupies 18–163 (VNEGDIAPNF…FEAALKAYRN (146 aa)). Cysteine 60 serves as the catalytic Cysteine sulfenic acid (-SOH) intermediate. Cysteines 60 and 93 form a disulfide.

It belongs to the peroxiredoxin family. Tpx subfamily. As to quaternary structure, homodimer.

It carries out the reaction a hydroperoxide + [thioredoxin]-dithiol = an alcohol + [thioredoxin]-disulfide + H2O. In terms of biological role, thiol-specific peroxidase that catalyzes the reduction of hydrogen peroxide and organic hydroperoxides to water and alcohols, respectively. Plays a role in cell protection against oxidative stress by detoxifying peroxides. This chain is Thiol peroxidase, found in Staphylococcus epidermidis (strain ATCC 35984 / DSM 28319 / BCRC 17069 / CCUG 31568 / BM 3577 / RP62A).